Reading from the N-terminus, the 159-residue chain is Phosphopantetheine adenylyltransferase (159 aa).

Substrate is bound at residue threonine 10. ATP is bound by residues 10-11 and histidine 18; that span reads TF. Residues lysine 42, methionine 74, and arginine 88 each coordinate substrate. ATP is bound by residues 89 to 91, glutamate 99, and 124 to 130; these read GLR and WSFISSS.

This sequence belongs to the bacterial CoaD family. In terms of assembly, homohexamer. It depends on Mg(2+) as a cofactor.

Its subcellular location is the cytoplasm. It carries out the reaction (R)-4'-phosphopantetheine + ATP + H(+) = 3'-dephospho-CoA + diphosphate. The protein operates within cofactor biosynthesis; coenzyme A biosynthesis; CoA from (R)-pantothenate: step 4/5. In terms of biological role, reversibly transfers an adenylyl group from ATP to 4'-phosphopantetheine, yielding dephospho-CoA (dPCoA) and pyrophosphate. The polypeptide is Phosphopantetheine adenylyltransferase (Klebsiella pneumoniae subsp. pneumoniae (strain ATCC 700721 / MGH 78578)).